The sequence spans 89 residues: Small ribosomal subunit protein uS15 (89 aa).

Belongs to the universal ribosomal protein uS15 family. Part of the 30S ribosomal subunit. Forms a bridge to the 50S subunit in the 70S ribosome, contacting the 23S rRNA.

Its function is as follows. One of the primary rRNA binding proteins, it binds directly to 16S rRNA where it helps nucleate assembly of the platform of the 30S subunit by binding and bridging several RNA helices of the 16S rRNA. Functionally, forms an intersubunit bridge (bridge B4) with the 23S rRNA of the 50S subunit in the ribosome. In Leuconostoc citreum (strain KM20), this protein is Small ribosomal subunit protein uS15.